We begin with the raw amino-acid sequence, 360 residues long: Phospho-N-acetylmuramoyl-pentapeptide-transferase (360 aa).

Helical transmembrane passes span 26–46 (AIVS…RMIA), 72–92 (PTMG…LWAY), 94–114 (SNPY…IGFV), 132–152 (WKYF…YLAG), 168–188 (VMPQ…VGTG), 199–219 (GLAI…AWAT), 236–256 (AGEL…FLWF), 263–283 (VFMG…IAVL), 288–308 (FLLV…ILQV), and 338–358 (VIVR…ATLK).

The protein belongs to the glycosyltransferase 4 family. MraY subfamily. Mg(2+) is required as a cofactor.

Its subcellular location is the cell inner membrane. It carries out the reaction UDP-N-acetyl-alpha-D-muramoyl-L-alanyl-gamma-D-glutamyl-meso-2,6-diaminopimeloyl-D-alanyl-D-alanine + di-trans,octa-cis-undecaprenyl phosphate = di-trans,octa-cis-undecaprenyl diphospho-N-acetyl-alpha-D-muramoyl-L-alanyl-D-glutamyl-meso-2,6-diaminopimeloyl-D-alanyl-D-alanine + UMP. The protein operates within cell wall biogenesis; peptidoglycan biosynthesis. In terms of biological role, catalyzes the initial step of the lipid cycle reactions in the biosynthesis of the cell wall peptidoglycan: transfers peptidoglycan precursor phospho-MurNAc-pentapeptide from UDP-MurNAc-pentapeptide onto the lipid carrier undecaprenyl phosphate, yielding undecaprenyl-pyrophosphoryl-MurNAc-pentapeptide, known as lipid I. This chain is Phospho-N-acetylmuramoyl-pentapeptide-transferase, found in Enterobacter sp. (strain 638).